The following is a 417-amino-acid chain: NADH-quinone oxidoreductase subunit D (417 aa).

The protein belongs to the complex I 49 kDa subunit family. NDH-1 is composed of 14 different subunits. Subunits NuoB, C, D, E, F, and G constitute the peripheral sector of the complex.

Its subcellular location is the cell inner membrane. It catalyses the reaction a quinone + NADH + 5 H(+)(in) = a quinol + NAD(+) + 4 H(+)(out). In terms of biological role, NDH-1 shuttles electrons from NADH, via FMN and iron-sulfur (Fe-S) centers, to quinones in the respiratory chain. The immediate electron acceptor for the enzyme in this species is believed to be ubiquinone. Couples the redox reaction to proton translocation (for every two electrons transferred, four hydrogen ions are translocated across the cytoplasmic membrane), and thus conserves the redox energy in a proton gradient. This chain is NADH-quinone oxidoreductase subunit D, found in Burkholderia ambifaria (strain ATCC BAA-244 / DSM 16087 / CCUG 44356 / LMG 19182 / AMMD) (Burkholderia cepacia (strain AMMD)).